An 844-amino-acid chain; its full sequence is Elongation factor 2 (844 aa).

One can recognise a tr-type G domain in the interval Thr-17–Lys-255. Ala-26–Ser-33 contacts GTP. 2 positions are modified to phosphothreonine: Thr-57 and Thr-59. GTP-binding positions include Asn-160–Asp-163 and Ser-215–Leu-217. At His-700 the chain carries Diphthamide.

The protein belongs to the TRAFAC class translation factor GTPase superfamily. Classic translation factor GTPase family. EF-G/EF-2 subfamily.

Its subcellular location is the cytoplasm. The catalysed reaction is GTP + H2O = GDP + phosphate + H(+). Its function is as follows. Catalyzes the GTP-dependent ribosomal translocation step during translation elongation. During this step, the ribosome changes from the pre-translocational (PRE) to the post-translocational (POST) state as the newly formed A-site-bound peptidyl-tRNA and P-site-bound deacylated tRNA move to the P and E sites, respectively. Catalyzes the coordinated movement of the two tRNA molecules, the mRNA and conformational changes in the ribosome. In Neurospora crassa (strain ATCC 24698 / 74-OR23-1A / CBS 708.71 / DSM 1257 / FGSC 987), this protein is Elongation factor 2 (cot-3).